The chain runs to 800 residues: MQHTMSFRIFLRRYATKHDLSKVRNIGIIAHIDAGKTTTTERMLYYSGKINRIGDVDQGDTITDYLPQERSRGITIQSAAISFNWKKDYKINLIDTPGHADFTFEVIRSLKVLDSCVTILDSVAGVEAQTEKVWKQSSGLPKICFLNKMDRVGAGFSRTVKELVVKMNTRALLINTPIFQVDPVTNESKFSGVLDLIYGKQLIWDTNDPDKINVTDVDENHDCYEYLVRGREALVETLGETDESIVEHFFNDADGEYLNVSPEVLNASIRKATISLSATPVLCGASFRNIGVQPLLDAIANYLPSPSEARPPELNHKNVPITQNPLTGLVLNKNPNLCVALAFKVITDAIRGTMIFIRVYSGVLRSNHTVYNTTTGTKFKIGKLVRMHANVPEEVNELYPGDIGVLTGSNVSEHIRTGDTIVTHVTKKDGLRSFDKNVELTLKINPIEIPPPVFNAAIEPKTLGNKKPMEQALSQLTREDPSLVVTHDEETGQTLLSGMGELHLDIARDRLLNELNAQVDVERVIVSYKETLNHSTQEKTLETDDGYKITAVIEPLDEEMKAKAKKDEEWFSLANDNNFMIMEKHTKYDPDKNWPFQVPYVAVVNALLPSSLVALQRGGKIGGFPLSSCVIRIKNDWDLPIDAPSISPLLTLSRQLFTQILLGEDQSNYSVLEPVMNVDVTVQQQDMGPVIQDLSSARKANILSIEDENTNTVSESNIRFQHIADKMWLPEDPTLEFAKLGKEGQAPKMVKAQAPLKEMVAYNNKIRSITQGRGSFNMYYHGMQPVTHDRLQSVLADYHQ.

In terms of domain architecture, tr-type G spans S21 to S307. Residues A30–T37, D95–H99, and N147–D150 contribute to the GTP site.

This sequence belongs to the TRAFAC class translation factor GTPase superfamily. Classic translation factor GTPase family. EF-G/EF-2 subfamily.

Its subcellular location is the mitochondrion. Functionally, mitochondrial GTPase that mediates the disassembly of ribosomes from messenger RNA at the termination of mitochondrial protein biosynthesis. Not involved in the GTP-dependent ribosomal translocation step during translation elongation. This chain is Ribosome-releasing factor 2, mitochondrial, found in Kluyveromyces lactis (strain ATCC 8585 / CBS 2359 / DSM 70799 / NBRC 1267 / NRRL Y-1140 / WM37) (Yeast).